A 334-amino-acid chain; its full sequence is Phenylalanine--tRNA ligase alpha subunit (334 aa).

Residue Glu-249 coordinates Mg(2+).

Belongs to the class-II aminoacyl-tRNA synthetase family. Phe-tRNA synthetase alpha subunit type 1 subfamily. Tetramer of two alpha and two beta subunits. Requires Mg(2+) as cofactor.

The protein resides in the cytoplasm. The enzyme catalyses tRNA(Phe) + L-phenylalanine + ATP = L-phenylalanyl-tRNA(Phe) + AMP + diphosphate + H(+). The polypeptide is Phenylalanine--tRNA ligase alpha subunit (Desulfatibacillum aliphaticivorans).